Reading from the N-terminus, the 778-residue chain is Semaphorin-3ab (778 aa).

Residues Met-1–Pro-17 form the signal peptide. The region spanning Arg-32–Leu-515 is the Sema domain. A glycan (N-linked (GlcNAc...) asparagine) is linked at Asn-54. Cys-105 and Cys-116 are disulfide-bonded. Asn-127 is a glycosylation site (N-linked (GlcNAc...) asparagine). 4 disulfide bridges follow: Cys-134/Cys-143, Cys-270/Cys-382, Cys-294/Cys-342, and Cys-518/Cys-536. One can recognise an Ig-like C2-type domain in the interval Gly-579–Leu-668. An N-linked (GlcNAc...) asparagine glycan is attached at Asn-593. Cys-652 and Cys-716 are oxidised to a cystine. Residues Arg-727–Val-778 form a disordered region. A compositionally biased stretch (polar residues) spans His-735–His-751. The span at Leu-756–Val-778 shows a compositional bias: basic and acidic residues.

The protein belongs to the semaphorin family. As to expression, expressed in rhombomeres three and five, and in the posterior half of newly formed somites which is avoided by ventrally extending motor axons.

It localises to the secreted. Functionally, might normally influence the midsegmental pathway choice of the ventrally extending motor axons by contributing to a repulsive domain in the posterior somite. The protein is Semaphorin-3ab (sema3ab) of Danio rerio (Zebrafish).